Reading from the N-terminus, the 171-residue chain is Adenine phosphoribosyltransferase (171 aa).

This sequence belongs to the purine/pyrimidine phosphoribosyltransferase family. Homodimer.

It is found in the cytoplasm. The enzyme catalyses AMP + diphosphate = 5-phospho-alpha-D-ribose 1-diphosphate + adenine. Its pathway is purine metabolism; AMP biosynthesis via salvage pathway; AMP from adenine: step 1/1. Its function is as follows. Catalyzes a salvage reaction resulting in the formation of AMP, that is energically less costly than de novo synthesis. The chain is Adenine phosphoribosyltransferase (apt) from Prochlorococcus marinus subsp. pastoris (strain CCMP1986 / NIES-2087 / MED4).